A 60-amino-acid chain; its full sequence is Large ribosomal subunit protein uL30 (60 aa).

It belongs to the universal ribosomal protein uL30 family. Part of the 50S ribosomal subunit.

This is Large ribosomal subunit protein uL30 from Syntrophobacter fumaroxidans (strain DSM 10017 / MPOB).